Here is a 291-residue protein sequence, read N- to C-terminus: Phosphate import ATP-binding protein PstB (291 aa).

In terms of domain architecture, ABC transporter spans Tyr45–Ile286. Gly77–Ser84 lines the ATP pocket.

The protein belongs to the ABC transporter superfamily. Phosphate importer (TC 3.A.1.7) family. In terms of assembly, the complex is composed of two ATP-binding proteins (PstB), two transmembrane proteins (PstC and PstA) and a solute-binding protein (PstS).

It localises to the cell membrane. The enzyme catalyses phosphate(out) + ATP + H2O = ADP + 2 phosphate(in) + H(+). Part of the ABC transporter complex PstSACB involved in phosphate import. Responsible for energy coupling to the transport system. The chain is Phosphate import ATP-binding protein PstB from Staphylococcus epidermidis (strain ATCC 12228 / FDA PCI 1200).